The following is a 1491-amino-acid chain: Chromosome partition protein MukB (1491 aa).

34–41 (GGNGAGKS) is a binding site for ATP. Coiled-coil stretches lie at residues 302-418 (LIEQ…QYQQ), 488-600 (EVAR…RFES), 638-666 (ELEKAQSMAKDKLAERRAKLDSEIERLAS), 781-806 (RAAREQRLELLREERDDVVEQHAKAS), 836-1109 (EQAL…DLRT), and 1210-1239 (VEAIEEMEVELARLTEELTQREQRLAISSD). The segment at 667 to 784 (PGGSNDPRLK…AIPLFGRAAR (118 aa)) is flexible hinge. The segment at 1059–1080 (QRRRDELQERLHTSRSRKSEYE) is disordered.

This sequence belongs to the SMC family. MukB subfamily. Homodimerization via its hinge domain. Binds to DNA via its C-terminal region. Interacts, and probably forms a ternary complex, with MukE and MukF via its C-terminal region. The complex formation is stimulated by calcium or magnesium. Interacts with tubulin-related protein FtsZ.

The protein resides in the cytoplasm. The protein localises to the nucleoid. Its function is as follows. Plays a central role in chromosome condensation, segregation and cell cycle progression. Functions as a homodimer, which is essential for chromosome partition. Involved in negative DNA supercoiling in vivo, and by this means organize and compact chromosomes. May achieve or facilitate chromosome segregation by condensation DNA from both sides of a centrally located replisome during cell division. In Vibrio cholerae serotype O1 (strain ATCC 39541 / Classical Ogawa 395 / O395), this protein is Chromosome partition protein MukB.